Consider the following 545-residue polypeptide: Probable sucrose-6-phosphate hydrolase (545 aa).

Substrate is bound by residues 107-110 (LLND), Q126, 169-170 (FS), 230-231 (RD), and E285. The active site involves D110.

The protein belongs to the glycosyl hydrolase 32 family.

The protein localises to the cytoplasm. It carries out the reaction Hydrolysis of terminal non-reducing beta-D-fructofuranoside residues in beta-D-fructofuranosides.. It functions in the pathway glycan biosynthesis; sucrose metabolism. Functionally, enables the bacterium to metabolize sucrose as a sole carbon source. This chain is Probable sucrose-6-phosphate hydrolase, found in Psychromonas ingrahamii (strain DSM 17664 / CCUG 51855 / 37).